We begin with the raw amino-acid sequence, 979 residues long: MSFDGLIVENENTKSGYNDGNDLTDLFKQNGTDMSVINSLLGDTNNPGMNESPKILDSSFENSNPQDGPNYEDFDFMGSIHKEFGNNINEMDDMEDVSDDNLPEEEQAVNYTGDKDDEDFGKLLAKEMGEEAAGQVLSGVGFSIPSGLVPPSEPSKTVSSTTEELQNEAQIRESIVKTFFPTFERGVLLNFSELFKPKPVKLAPPKKKTPKVCVPGRLTLEVDTDYAIIFNSKKSLPLKRNVVSPISTHTKKRRRTANTSQRNDGLDLNTVFTTNDWEKNIIYDESDVNKTNQSSFFIDKSLVDIDFAFDENIFDGDTGTSKVVLNLNDPKLLLQPQLPKKEDSQRSFADTHQRNSLAWKFNISNDPAYEMLKQNHQSKVRNTLSQLAIEHAAFAEKLTFPYYKTRLSKRAVRSYHRPTMSFKPNAAIVFSPLIVRKRSKDKHKSERELIPTTKEITMGDTTHAILVEFSEEHPAVLSNAGMASRIVNYYRKKNEQDESRPKLEVGESHVLDVQDRSPFWNFGSVEPGEITPTLYNKMIRAPLFKHEVPPTDFILIRNSSSYGSKYYLKNINHMFVSGQTFPVTDVPGPHSRKVTTASKNRLKMLVFRLIRRSPNGGLFIRQLSKHFSDQNEMQIRQRLKEFMEYKKKGDGPGYWKLKSNEVVPDEAGTRSMVSPETVCLLESMQVGVRQLEDAGYGKTMDEINDDEDEEQPAEQLLAPWITTRNFINATQGKAMLTLFGEGDPTGIGEGYSFIRTSMKGGFKPAGETADDKPEPQTKNAHAYNVAKQQRAYEEEINRIWNAQKRGLSINNLEELAKKYGINSIHDDYVESNEETTREETPSSDKVLRIVRLYRDKNGNLERKQETIHDPIVIHAYLKKRREIDEQSTALDAVVPTGDEAIDRRNRRRLEQELAKSQKNWERRRARHAAKEGINLNGEGRKPTTRKCSNCGQVGHMKTNKICPLFGRPEGGLATMLDKN.

The residue at position 244 (S244) is a Phosphoserine.

As to quaternary structure, TFIID is composed of TATA binding protein (TBP) and a number of TBP-associated factors (TAFs).

It is found in the nucleus. In terms of biological role, TAFs are components of the transcription factor IID (TFIID) complex that are essential for mediating regulation of RNA polymerase transcription. The sequence is that of Putative transcription initiation factor TFIID 111 kDa subunit from Schizosaccharomyces pombe (strain 972 / ATCC 24843) (Fission yeast).